The sequence spans 447 residues: Asparagine--tRNA ligase (447 aa).

It belongs to the class-II aminoacyl-tRNA synthetase family. Homodimer.

It localises to the cytoplasm. It catalyses the reaction tRNA(Asn) + L-asparagine + ATP = L-asparaginyl-tRNA(Asn) + AMP + diphosphate + H(+). The sequence is that of Asparagine--tRNA ligase from Mycoplasma mobile (strain ATCC 43663 / 163K / NCTC 11711) (Mesomycoplasma mobile).